The sequence spans 420 residues: MGIKNLYKRGVMGLYGVAYAVAALAMTVTLDVSTVAAHGERSQEPFLRMRTVQWYDIKWGPEVTKVNENAKITGKFHLAEDWPRAAAQPDFSFFNVGSPSPVFVRLSTKINGHPWFISGPLQIGRDYEFEVNLRARIPGRHHMHAMLNVKDAGPIAGPGAWMNITGSWDDFTNPLKLLTGETIDSETFNLSNGIFWHVVWMSIGIFWIGVFTARPMFLPRSRVLLAYGDDLLMDPMDKKITWVLAILTLALVWGGYRYTENKHPYTVPIQAGQSKVAALPVAPNPVSIVITDANYDVPGRALRVTMEVTNNGDIPVTFGEFTTAGIRFINSTGRKYLDPQYPRELIAVGLNFDDESAIQPGQTKELKMEAKDALWEIQRLMALLGDPESRFGGLLMSWDAEGNRHINSIAGPVIPVFTKL.

The N-terminal stretch at 1 to 25 is a signal peptide; that stretch reads MGIKNLYKRGVMGLYGVAYAVAALA. Cu cation-binding residues include H38, H142, and H144. Helical transmembrane passes span 193–213 and 240–260; these read GIFWHVVWMSIGIFWIGVFTA and ITWVLAILTLALVWGGYRYTE.

The soluble ammonia monooxygenase is a nonamer composed of three alpha subunits (AmoA), three beta subunits (AmoB) and three gamma subunits (Cytochrome c1 PetC). Cu(2+) is required as a cofactor.

Its subcellular location is the cell membrane. It is found in the cytoplasm. The enzyme catalyses AH2 + NH4(+) + O2 = hydroxylamine + A + H2O + H(+). With respect to regulation, in vitro, inhibited by acetylene. Part of the ammonia monooxygenase complex, which catalyzes the oxidation of ammonia to hydroxylamine, the first reaction in the process of ammonia oxidation to nitrite. The chain is Ammonia monooxygenase beta subunit from Nitrosomonas europaea (strain ATCC 19718 / CIP 103999 / KCTC 2705 / NBRC 14298).